The primary structure comprises 498 residues: MLQKISSDSYRRLLAPVLSSSSSLSSTSINRTEIERITIIINGHPFPNHPIQPILAKHIPLSSLSPEFVSEVLGRLFAAHSNGLKALEFFKYSLKSSKSSPTSDSFEKTLHILARMRYFDQAWALMAEVRKDYPNLLSFKSMSILLCKIAKFGSYEETLEAFVKMEKEIFRKKFGVDEFNILLRAFCTEREMKEARSIFEKLHSRFNPDVKTMNILLLGFKEAGDVTATELFYHEMVKRGFKPNSVTYGIRIDGFCKKRNFGEALRLFEDMDRLDFDITVQILTTLIHGSGVARNKIKARQLFDEISKRGLTPDCGAYNALMSSLMKCGDVSGAIKVMKEMEEKGIEPDSVTFHSMFIGMMKSKEFGFNGVCEYYQKMKERSLVPKTPTIVMLMKLFCHNGEVNLGLDLWKYMLEKGYCPHGHALELLTTALCARRRANDAFECSWQTVERGRCVSEPVYRMLETSLSSNNELKKLEELKEEIQKLHSFLPPPEIQLM.

PPR repeat units lie at residues 102-132 (TSDS…VRKD), 138-172 (SFKS…IFRK), 175-205 (GVDE…LHSR), 209-243 (DVKT…GFKP), 244-278 (NSVT…DFDI), 279-313 (TVQI…GLTP), 314-348 (DCGA…GIEP), 349-385 (DSVT…SLVP), and 386-420 (KTPT…GYCP).

Belongs to the PPR family. P subfamily.

This Arabidopsis thaliana (Mouse-ear cress) protein is Pentatricopeptide repeat-containing protein At3g61360.